Consider the following 166-residue polypeptide: Small ribosomal subunit protein uS5 (166 aa).

Residues 11 to 74 form the S5 DRBM domain; the sequence is LQEKLIAVNR…EKARRNMINV (64 aa).

This sequence belongs to the universal ribosomal protein uS5 family. Part of the 30S ribosomal subunit. Contacts proteins S4 and S8.

Its function is as follows. With S4 and S12 plays an important role in translational accuracy. In terms of biological role, located at the back of the 30S subunit body where it stabilizes the conformation of the head with respect to the body. The polypeptide is Small ribosomal subunit protein uS5 (Mannheimia succiniciproducens (strain KCTC 0769BP / MBEL55E)).